Consider the following 116-residue polypeptide: Iron-sulfur cluster insertion protein ErpA (116 aa).

C44, C108, and C110 together coordinate iron-sulfur cluster.

The protein belongs to the HesB/IscA family. As to quaternary structure, homodimer. Requires iron-sulfur cluster as cofactor.

Functionally, required for insertion of 4Fe-4S clusters for at least IspG. The sequence is that of Iron-sulfur cluster insertion protein ErpA from Shewanella baltica (strain OS223).